We begin with the raw amino-acid sequence, 286 residues long: MSVLGACITPFKADLSIDFAALESVVRSQEHAGNGIILFGSTGEGLSLTYEEKLSILSFVSTLNLNVPIFVGVTATSVQETMSWIDFAQQWPIDGFLVPTPLYTRPGLNGQKAWFDRILSVSRKPIILYNNPIRTGVSLYPEVVKSFVSHPLCIGVKDSGGSAQACELFAESGLRVFCGDDNLWPDMRLSGASGVISVLANVWPELARDYVAQGRPIEAWKKVCSWLNLSTNPLGIKALMAAQKMIECDAVRPPLSIRDLQRRDELADILACRATLQTELLSVCRQ.

Thr42 contacts pyruvate. Tyr129 serves as the catalytic Proton donor/acceptor. Catalysis depends on Lys157, which acts as the Schiff-base intermediate with substrate. Ile196 lines the pyruvate pocket.

The protein belongs to the DapA family. As to quaternary structure, homotetramer; dimer of dimers.

It localises to the cytoplasm. It catalyses the reaction L-aspartate 4-semialdehyde + pyruvate = (2S,4S)-4-hydroxy-2,3,4,5-tetrahydrodipicolinate + H2O + H(+). The protein operates within amino-acid biosynthesis; L-lysine biosynthesis via DAP pathway; (S)-tetrahydrodipicolinate from L-aspartate: step 3/4. Its function is as follows. Catalyzes the condensation of (S)-aspartate-beta-semialdehyde [(S)-ASA] and pyruvate to 4-hydroxy-tetrahydrodipicolinate (HTPA). This is 4-hydroxy-tetrahydrodipicolinate synthase from Chlamydia trachomatis serovar A (strain ATCC VR-571B / DSM 19440 / HAR-13).